We begin with the raw amino-acid sequence, 2633 residues long: Non-reducing polyketide synthase sor2 (2633 aa).

The interval 67–237 (VSNAQKLAEW…TTSTRTVAAL (171 aa)) is N-terminal acylcarrier protein transacylase domain (SAT). Cys-140 serves as the catalytic Nucleophile; for transacylase activity. His-258 (proton donor/acceptor; for transacylase activity) is an active-site residue. The region spanning 389-814 (ENDIAVIGMA…GSNASVIIKQ (426 aa)) is the Ketosynthase family 3 (KS3) domain. Active-site for beta-ketoacyl synthase activity residues include Cys-561, His-696, and His-737. Residues 928–1239 (CFGGQVSTFV…SKASSQLSDV (312 aa)) form a malonyl-CoA:ACP transacylase (MAT) domain region. Positions 1307–1437 (PQPVGLYTLL…GQLHFQASDD (131 aa)) are N-terminal hotdog fold. Residues 1307–1627 (PQPVGLYTLL…YAPVSLDQLF (321 aa)) form the PKS/mFAS DH domain. Residues 1338-1509 (MSDHAIGKAQ…SNESAGRLVR (172 aa)) are product template (PT) domain. The tract at residues 1464–1627 (GRSDEVIQGQ…YAPVSLDQLF (164 aa)) is C-terminal hotdog fold. The region spanning 1684–1758 (EELWLRLRPV…GILKFLQSTL (75 aa)) is the Carrier domain. At Ser-1718 the chain carries O-(pantetheine 4'-phosphoryl)serine. Positions 1762–1792 (DVHDSSETMSTVSSDGNVHSPPTSGSEMASP) are disordered. The segment covering 1768–1790 (ETMSTVSSDGNVHSPPTSGSEMA) has biased composition (polar residues). Residues 1982 to 2166 (FELMADFLTR…ASGFKHVRWT (185 aa)) are methyltransferase domain. Residues 2253-2495 (VTGATGSLGS…TLRALPDVDG (243 aa)) form an NADPH-binding (R) domain region.

Requires pantetheine 4'-phosphate as cofactor.

It functions in the pathway secondary metabolite biosynthesis. In terms of biological role, non-reducing polyketide synthase; part of the SOR gene cluster that mediates the biosynthesis of sorbicillinoids, a diverse group of yellow secondary metabolites that restrict growth of competing pathogenic fungi but not of bacteria. Sorbicillinoids biosynthesis requires the action of two PKSs. The SOR cluster is required for the production of trichodimerol and dihydrotrichotetronin, with sor2 being sufficient for production of trichodimerol, but not dihydrotrichotetronin in the light. Sor1 iteratively combines three acetyl units and the growing chain is modified by the ketoacyl reductase subunit, and optional by the enoyl reductase subunit in the second cycle. The polyketide is then handed over to the PKS sor2, which adds three more acetyl units, and two methyl groups. Sor2 releases an aldehyde, which undergoes spontaneous cyclization resulting in the formation of sorbicillin or 2',3'-dihydrosorbicillin. The monooxygenase sor5 oxidizes sorbicillin and 2',3'-dihydrosorbicillin to 2',3'-dihydrosorbicillinol and sorbicillinol, respectively. The oxidoreductase sor8 further converts sorbicillinol into oxosorbicillinol. Sorbicillinol is the building block for the other sorbicillinoids such as disorbicillinol, bisvertinolon, dihydrobisvertinolone, and dihydrotrichotetronine. The polypeptide is Non-reducing polyketide synthase sor2 (Hypocrea jecorina (strain QM6a) (Trichoderma reesei)).